The primary structure comprises 692 residues: Penicillin-binding protein activator LpoA (692 aa).

Positions M1–A26 are cleaved as a signal peptide. The N-palmitoyl cysteine moiety is linked to residue C27. C27 carries the S-diacylglycerol cysteine lipid modification. Disordered stretches follow at residues A297 to T316 and V324 to H373. A compositionally biased stretch (low complexity) spans P332–P363.

Belongs to the LpoA family. In terms of assembly, interacts with PBP1a.

Its subcellular location is the cell outer membrane. Its function is as follows. Regulator of peptidoglycan synthesis that is essential for the function of penicillin-binding protein 1A (PBP1a). In Edwardsiella piscicida, this protein is Penicillin-binding protein activator LpoA.